The following is a 187-amino-acid chain: Elongation factor P (187 aa).

Belongs to the elongation factor P family.

It is found in the cytoplasm. It functions in the pathway protein biosynthesis; polypeptide chain elongation. Functionally, involved in peptide bond synthesis. Stimulates efficient translation and peptide-bond synthesis on native or reconstituted 70S ribosomes in vitro. Probably functions indirectly by altering the affinity of the ribosome for aminoacyl-tRNA, thus increasing their reactivity as acceptors for peptidyl transferase. The chain is Elongation factor P from Corynebacterium urealyticum (strain ATCC 43042 / DSM 7109).